Reading from the N-terminus, the 624-residue chain is MNLEQLYDVIVVGGGHAGTEAALAAARLGVKTLLLTHNIDLLGQMSCNPAIGGIGKGHLVKEIDALDGAMAKAADQAGIQFRILNASKGPAVRATRAQADRVLYRKAIRTQLQSQANLTIFQQAVDDLKIEGGLVTGVVTQMGLTLKARAVVLTVGTFLGGKIHVGMNQYAGGRAGDPPSIALSKSLRDLDLPVGRLKTGTPPRIDRRTIDFSQMVEQPGDTPVPVFSYLGAASDHPQQVPCHITHTTEATHDIIRNNLDKSPMYAGVIEGVGPRYCPSIEDKIVRFADKTSHQIFVEPEGLTTEEIYPNGISTSLPFEVQVQFVRTIKGFENAHITRPGYAIEYDYFDPRGLTSFLQTKAIPNLFFAGQINGTTGYEEAAAQGIIAGMNAALQIKDQELWCPRRDEAYIGVLIDDLITCGTQEPYRMFTSRAEYRLLLREDNADLRLTEKGRQLGLVGDERWDSFSKKREAIESTQALLYNSWVRVHHNDLFKETLFNPMQHDCRAVEFLKRPEINYQHLLMMDDLNLPELPQEITEQIEIQNKYAGYIDRQQQEIEKLRKHENTLLPETLDYNDVVGLSSEVIQKLNRIKPTSLAQAGRISGVTPAALSLLLVHLKKSRLPV.

FAD is bound by residues 13–18, valine 125, and serine 180; that span reads GGGHAG. 273 to 287 is a binding site for NAD(+); that stretch reads GPRYCPSIEDKIVRF. Glutamine 370 is an FAD binding site.

The protein belongs to the MnmG family. As to quaternary structure, homodimer. Heterotetramer of two MnmE and two MnmG subunits. FAD serves as cofactor.

Its subcellular location is the cytoplasm. Functionally, NAD-binding protein involved in the addition of a carboxymethylaminomethyl (cmnm) group at the wobble position (U34) of certain tRNAs, forming tRNA-cmnm(5)s(2)U34. The chain is tRNA uridine 5-carboxymethylaminomethyl modification enzyme MnmG from Legionella pneumophila subsp. pneumophila (strain Philadelphia 1 / ATCC 33152 / DSM 7513).